A 287-amino-acid chain; its full sequence is Sulfofructosephosphate aldolase (287 aa).

Asp82 serves as the catalytic Proton donor. Zn(2+) contacts are provided by His83 and His180. Gly181 contributes to the dihydroxyacetone phosphate binding site. Position 208 (His208) interacts with Zn(2+). Residues Gly209–Ser211 and Asn230–Thr233 each bind dihydroxyacetone phosphate.

Belongs to the class II fructose-bisphosphate aldolase family. Zn(2+) serves as cofactor.

The enzyme catalyses 6-deoxy-6-sulfo-D-fructose 1-phosphate = (2S)-3-sulfolactaldehyde + dihydroxyacetone phosphate. In terms of biological role, part of the sulfo-EMP2 pathway, a D-sulfoquinovose degradation pathway that produces sulfolactate (SL). Cleaves 6-deoxy-6-sulfo-D-fructose 1-phosphate (SFP) to form dihydroxyacetone phosphate (DHAP) and 3-sulfolactaldehyde (SLA). The protein is Sulfofructosephosphate aldolase of Alkalicoccus urumqiensis (Bacillus urumqiensis).